Reading from the N-terminus, the 318-residue chain is Acetyl-coenzyme A carboxylase carboxyl transferase subunit alpha (318 aa).

Residues 34–295 (DIEDQISQLR…KQAIKKDLSE (262 aa)) enclose the CoA carboxyltransferase C-terminal domain.

This sequence belongs to the AccA family. In terms of assembly, acetyl-CoA carboxylase is a heterohexamer composed of biotin carboxyl carrier protein (AccB), biotin carboxylase (AccC) and two subunits each of ACCase subunit alpha (AccA) and ACCase subunit beta (AccD).

It localises to the cytoplasm. The enzyme catalyses N(6)-carboxybiotinyl-L-lysyl-[protein] + acetyl-CoA = N(6)-biotinyl-L-lysyl-[protein] + malonyl-CoA. It participates in lipid metabolism; malonyl-CoA biosynthesis; malonyl-CoA from acetyl-CoA: step 1/1. Functionally, component of the acetyl coenzyme A carboxylase (ACC) complex. First, biotin carboxylase catalyzes the carboxylation of biotin on its carrier protein (BCCP) and then the CO(2) group is transferred by the carboxyltransferase to acetyl-CoA to form malonyl-CoA. This Colwellia psychrerythraea (strain 34H / ATCC BAA-681) (Vibrio psychroerythus) protein is Acetyl-coenzyme A carboxylase carboxyl transferase subunit alpha.